Consider the following 178-residue polypeptide: Small ribosomal subunit protein uS5 (178 aa).

In terms of domain architecture, S5 DRBM spans 17–80 (FEERIVEIRR…AAARASVVEI (64 aa)).

The protein belongs to the universal ribosomal protein uS5 family. Part of the 30S ribosomal subunit. Contacts proteins S4 and S8.

In terms of biological role, with S4 and S12 plays an important role in translational accuracy. Functionally, located at the back of the 30S subunit body where it stabilizes the conformation of the head with respect to the body. The protein is Small ribosomal subunit protein uS5 of Pseudothermotoga lettingae (strain ATCC BAA-301 / DSM 14385 / NBRC 107922 / TMO) (Thermotoga lettingae).